Reading from the N-terminus, the 837-residue chain is Translation initiation factor IF-2 (837 aa).

Residues 94–252 (QRSPEEIEAE…NAHGFQSPTG (159 aa)) are disordered. The segment covering 96–136 (SPEEIEAERKRELDERRAVENAARQKAEEEARVRAEEEARR) has biased composition (basic and acidic residues). Residues 137–171 (QPAAPSAPAEAVAAPAPVAEPVREAAPVVAAAPAA) are compositionally biased toward low complexity. Composition is skewed to basic and acidic residues over residues 172 to 213 (DTRK…EKAP) and 221 to 230 (TTDEESDGFR). The segment covering 231–244 (RGGRGKAKLKKRNA) has biased composition (basic residues). In terms of domain architecture, tr-type G spans 337–506 (PRAPVVTVMG…LLQAEVLELT (170 aa)). A G1 region spans residues 346 to 353 (GHVDHGKT). GTP is bound at residue 346-353 (GHVDHGKT). Residues 371–375 (GITQH) are G2. Positions 392 to 395 (DTPG) are G3. GTP contacts are provided by residues 392-396 (DTPGH) and 446-449 (NKID). A G4 region spans residues 446 to 449 (NKID). The tract at residues 482 to 484 (SAK) is G5.

This sequence belongs to the TRAFAC class translation factor GTPase superfamily. Classic translation factor GTPase family. IF-2 subfamily.

Its subcellular location is the cytoplasm. One of the essential components for the initiation of protein synthesis. Protects formylmethionyl-tRNA from spontaneous hydrolysis and promotes its binding to the 30S ribosomal subunits. Also involved in the hydrolysis of GTP during the formation of the 70S ribosomal complex. This chain is Translation initiation factor IF-2, found in Pseudomonas fluorescens (strain Pf0-1).